Reading from the N-terminus, the 72-residue chain is Cytochrome b-c1 complex subunit 9 (72 aa).

Topologically, residues 1-27 (MESAARRSGGGVLEGFYRLVMRRTPVY) are mitochondrial matrix. The helical transmembrane segment at 28-53 (VTFVIAGALLGERAVDYGVKTLWEKN) threads the bilayer. The Mitochondrial intermembrane portion of the chain corresponds to 54–72 (NVGKRYEDISVLGQRPVDE).

This sequence belongs to the UQCR10/QCR9 family. In terms of assembly, component of the ubiquinol-cytochrome c oxidoreductase (cytochrome b-c1 complex, complex III, CIII), a multisubunit enzyme composed of 3 respiratory subunits cytochrome b, cytochrome c1 and Rieske protein, 2 core protein subunits, and additional low-molecular weight protein subunits. The complex exists as an obligatory dimer and forms supercomplexes (SCs) in the inner mitochondrial membrane with cytochrome c oxidase (complex IV, CIV).

The protein resides in the mitochondrion inner membrane. Functionally, component of the ubiquinol-cytochrome c oxidoreductase, a multisubunit transmembrane complex that is part of the mitochondrial electron transport chain which drives oxidative phosphorylation. The respiratory chain contains 3 multisubunit complexes succinate dehydrogenase (complex II, CII), ubiquinol-cytochrome c oxidoreductase (cytochrome b-c1 complex, complex III, CIII) and cytochrome c oxidase (complex IV, CIV), that cooperate to transfer electrons derived from NADH and succinate to molecular oxygen, creating an electrochemical gradient over the inner membrane that drives transmembrane transport and the ATP synthase. The cytochrome b-c1 complex catalyzes electron transfer from ubiquinol to cytochrome c, linking this redox reaction to translocation of protons across the mitochondrial inner membrane, with protons being carried across the membrane as hydrogens on the quinol. In the process called Q cycle, 2 protons are consumed from the matrix, 4 protons are released into the intermembrane space and 2 electrons are passed to cytochrome c. This is Cytochrome b-c1 complex subunit 9 from Solanum tuberosum (Potato).